The primary structure comprises 1416 residues: DNA-directed RNA polymerase subunit beta (1416 aa).

A disordered region spans residues 1388 to 1416; sequence AKAAREQAEGELGGPLGTPRGAAAEKNTA.

It belongs to the RNA polymerase beta chain family. In terms of assembly, the RNAP catalytic core consists of 2 alpha, 1 beta, 1 beta' and 1 omega subunit. When a sigma factor is associated with the core the holoenzyme is formed, which can initiate transcription.

The enzyme catalyses RNA(n) + a ribonucleoside 5'-triphosphate = RNA(n+1) + diphosphate. Functionally, DNA-dependent RNA polymerase catalyzes the transcription of DNA into RNA using the four ribonucleoside triphosphates as substrates. The sequence is that of DNA-directed RNA polymerase subunit beta from Anaeromyxobacter sp. (strain Fw109-5).